The chain runs to 1166 residues: IQ domain-containing protein N (1166 aa).

The segment covering 1-19 (MQPATQLQFTNHLSPNGQC) has biased composition (polar residues). A disordered region spans residues 1-56 (MQPATQLQFTNHLSPNGQCILQPPPTPSLPDKMEKAPPQPQHEGLKSEEHLPQQPA). Residues 89–118 (HARAATLIQANWRGYRLRQKLISQMTAAKA) form the IQ 1 domain. Disordered regions lie at residues 431–450 (VCPG…VATP), 769–797 (LSAP…TTQG), and 829–848 (DSGA…PCQE). IQ domains are found at residues 907-932 (AVTT…RRAT), 928-955 (HRRA…RATT), 952-979 (RATT…MLHP), 1091-1119 (RDKA…MAAK), and 1114-1143 (QQMA…LLGP). The segment at 1145–1166 (DPWSSSQHMHWASSQHTHWPGI) is disordered. Over residues 1147–1166 (WSSSQHMHWASSQHTHWPGI) the composition is skewed to polar residues.

In terms of assembly, interacts with calmodulin.

In terms of biological role, essential for spermiogenesis and fertilization. May be required for manchette assembly in elongating spermatids. The sequence is that of IQ domain-containing protein N (IQCN) from Macaca fascicularis (Crab-eating macaque).